The sequence spans 250 residues: 2,3-bisphosphoglycerate-dependent phosphoglycerate mutase (250 aa).

Residues R10–N17, T23–G24, R62, E89–Y92, K100, R116–R117, and G185–N186 each bind substrate. H11 serves as the catalytic Tele-phosphohistidine intermediate. The active-site Proton donor/acceptor is E89.

This sequence belongs to the phosphoglycerate mutase family. BPG-dependent PGAM subfamily. In terms of assembly, homodimer.

It catalyses the reaction (2R)-2-phosphoglycerate = (2R)-3-phosphoglycerate. The protein operates within carbohydrate degradation; glycolysis; pyruvate from D-glyceraldehyde 3-phosphate: step 3/5. Its function is as follows. Catalyzes the interconversion of 2-phosphoglycerate and 3-phosphoglycerate. This chain is 2,3-bisphosphoglycerate-dependent phosphoglycerate mutase, found in Klebsiella pneumoniae (strain 342).